A 399-amino-acid polypeptide reads, in one-letter code: Glucose-1-phosphate adenylyltransferase (399 aa).

Alpha-D-glucose 1-phosphate is bound by residues Gly-158, 174–175 (EK), and Ser-192.

The protein belongs to the bacterial/plant glucose-1-phosphate adenylyltransferase family. As to quaternary structure, homotetramer.

The enzyme catalyses alpha-D-glucose 1-phosphate + ATP + H(+) = ADP-alpha-D-glucose + diphosphate. It participates in glycan biosynthesis; glycogen biosynthesis. In terms of biological role, involved in the biosynthesis of ADP-glucose, a building block required for the elongation reactions to produce glycogen. Catalyzes the reaction between ATP and alpha-D-glucose 1-phosphate (G1P) to produce pyrophosphate and ADP-Glc. This Streptomyces coelicolor (strain ATCC BAA-471 / A3(2) / M145) protein is Glucose-1-phosphate adenylyltransferase.